Consider the following 485-residue polypeptide: Glutamate--tRNA ligase (485 aa).

Residues 11-21 carry the 'HIGH' region motif; the sequence is PSPTGHLHIGN. The 'KMSKS' region motif lies at 252 to 256; sequence KLSKR. Lys255 is a binding site for ATP.

Belongs to the class-I aminoacyl-tRNA synthetase family. Glutamate--tRNA ligase type 1 subfamily. As to quaternary structure, monomer.

It localises to the cytoplasm. The enzyme catalyses tRNA(Glu) + L-glutamate + ATP = L-glutamyl-tRNA(Glu) + AMP + diphosphate. In terms of biological role, catalyzes the attachment of glutamate to tRNA(Glu) in a two-step reaction: glutamate is first activated by ATP to form Glu-AMP and then transferred to the acceptor end of tRNA(Glu). The protein is Glutamate--tRNA ligase of Bacillus licheniformis (strain ATCC 14580 / DSM 13 / JCM 2505 / CCUG 7422 / NBRC 12200 / NCIMB 9375 / NCTC 10341 / NRRL NRS-1264 / Gibson 46).